We begin with the raw amino-acid sequence, 406 residues long: Tryptophan synthase beta chain (406 aa).

Residue lysine 95 is modified to N6-(pyridoxal phosphate)lysine.

Belongs to the TrpB family. As to quaternary structure, tetramer of two alpha and two beta chains. Pyridoxal 5'-phosphate is required as a cofactor.

It carries out the reaction (1S,2R)-1-C-(indol-3-yl)glycerol 3-phosphate + L-serine = D-glyceraldehyde 3-phosphate + L-tryptophan + H2O. Its pathway is amino-acid biosynthesis; L-tryptophan biosynthesis; L-tryptophan from chorismate: step 5/5. Functionally, the beta subunit is responsible for the synthesis of L-tryptophan from indole and L-serine. This Azotobacter vinelandii (strain DJ / ATCC BAA-1303) protein is Tryptophan synthase beta chain.